We begin with the raw amino-acid sequence, 254 residues long: Putative ankyrin-containing lipoprotein Lxx09580 (254 aa).

The signal sequence occupies residues 1–22 (MTEIRYVRLLTLVLASSVLLAG). Residue Cys23 is the site of N-palmitoyl cysteine attachment. Residue Cys23 is the site of S-diacylglycerol cysteine attachment. 5 ANK repeats span residues 56-85 (AATASLHAAARSGDAEAVRSALAAGAAIED), 89-118 (GGRTPLVEAAKGNHVEAARALIEAGADVNA), 122-151 (IQDSAYLYAGAEGYLEILRMTLTTGADVNA), 155-184 (FNGTALIPASEHAHTEVVRMLIAAGVDLDH), and 188-222 (PGWTAMQEAIVLGNGGAGAQDVVRQLLAAGANPDI).

The protein localises to the cell membrane. This Leifsonia xyli subsp. xyli (strain CTCB07) protein is Putative ankyrin-containing lipoprotein Lxx09580.